Here is an 86-residue protein sequence, read N- to C-terminus: Kappa-theraphotoxin-Cg1a 3 (86 aa).

The first 21 residues, 1 to 21 (MKVSVLITLAVLGVMFVWASA), serve as a signal peptide directing secretion. Positions 22-50 (AELEERGSDQRDSPAWLKSMERIFRSEER) are excised as a propeptide. Intrachain disulfides connect Cys52–Cys66, Cys59–Cys71, and Cys65–Cys78. Phe84 bears the Phenylalanine amide mark.

The protein belongs to the neurotoxin 10 (Hwtx-1) family. 28 (Jztx-11) subfamily. As to expression, expressed by the venom gland.

The protein localises to the secreted. This toxin acts as a voltage-dependent gating-modifier. It inhibits the sodium conductance (IC(50)=124 nM) and slows the fast inactivation (EC(50)=1180 nM) of Nav1.5/SCN5A. It significantly shifts the activation to more depolarized voltages and decreases the deactivation of Nav1.5 currents upon extreme depolarization, but only slightly affects voltage-dependence of steady-state inactivation. In addition, this toxin causes an approximately five-fold decrease in the rate of recovery from inactivation and an approximately 1.9-fold reduction in the closed-state inactivation rate. This toxin integrates the functions of site 3 toxins (alpha-scorpion toxins) with site 4 toxins (beta-scorpion and spider toxins) by targeting multiple sites on Nav1.5. Also shows inhibition of voltage-gated potassium channels (5 uM completely inhibits Kv2.1/KCNB1, whereas 5 uM moderately inhibits Kv4.2/KCND2 Kv4.1/KCND1 channels). In Chilobrachys guangxiensis (Chinese earth tiger tarantula), this protein is Kappa-theraphotoxin-Cg1a 3.